The sequence spans 217 residues: Small ribosomal subunit protein uS11m (217 aa).

The transit peptide at M1–K59 directs the protein to the mitochondrion.

The protein belongs to the universal ribosomal protein uS11 family. Component of the mitochondrial small ribosomal subunit (mt-SSU). Mature yeast 74S mitochondrial ribosomes consist of a small (37S) and a large (54S) subunit. The 37S small subunit contains a 15S ribosomal RNA (15S mt-rRNA) and 34 different proteins. The 54S large subunit contains a 21S rRNA (21S mt-rRNA) and 46 different proteins.

It is found in the mitochondrion. Component of the mitochondrial ribosome (mitoribosome), a dedicated translation machinery responsible for the synthesis of mitochondrial genome-encoded proteins, including at least some of the essential transmembrane subunits of the mitochondrial respiratory chain. The mitoribosomes are attached to the mitochondrial inner membrane and translation products are cotranslationally integrated into the membrane. The polypeptide is Small ribosomal subunit protein uS11m (MRPS18) (Saccharomyces cerevisiae (strain ATCC 204508 / S288c) (Baker's yeast)).